The chain runs to 39 residues: Large ribosomal subunit protein bL36 (39 aa).

Belongs to the bacterial ribosomal protein bL36 family.

The sequence is that of Large ribosomal subunit protein bL36 from Limosilactobacillus reuteri (strain DSM 20016) (Lactobacillus reuteri).